The following is a 206-amino-acid chain: High frequency lysogenization protein HflD homolog (206 aa).

This sequence belongs to the HflD family.

It localises to the cytoplasm. It is found in the cell inner membrane. The sequence is that of High frequency lysogenization protein HflD homolog from Pseudomonas paraeruginosa (strain DSM 24068 / PA7) (Pseudomonas aeruginosa (strain PA7)).